A 794-amino-acid chain; its full sequence is Ent-kaurene synthase 1, chloroplastic (794 aa).

Residues M1–D28 constitute a chloroplast transit peptide. Mg(2+) is bound by residues D543, D547, N687, and E695. The DDXXD motif signature appears at D543–D547.

The protein belongs to the terpene synthase family. It depends on Mg(2+) as a cofactor. In terms of tissue distribution, accumulates in leaves, and, at low levels, in germinating seeds.

It is found in the plastid. The protein localises to the chloroplast. It carries out the reaction ent-copalyl diphosphate = ent-kaur-16-ene + diphosphate. The protein operates within secondary metabolite biosynthesis; terpenoid biosynthesis. Its pathway is plant hormone biosynthesis; gibberellin biosynthesis. Its function is as follows. Involved in the biosynthesis of ent-kaurene diterpenoids natural products such as oridonin, miltiradiene, eriocalyxin B and nezukol, known to exhibit antitumor, anti-inflammatory and antibacterial activities, and in the production of gibberellins phytohormones. Catalyzes the conversion of ent-copalyl diphosphate (ent-CPP) to ent-kaurene. This Isodon eriocalyx (Plectranthus eriocalyx) protein is Ent-kaurene synthase 1, chloroplastic.